The sequence spans 338 residues: tRNA N6-adenosine threonylcarbamoyltransferase (338 aa).

His-111 and His-115 together coordinate Fe cation. Residues 134–138 (LLSGG), Asp-167, Gly-180, and Asn-275 each bind substrate. Fe cation is bound at residue Asp-304.

It belongs to the KAE1 / TsaD family. Fe(2+) serves as cofactor.

It localises to the cytoplasm. The enzyme catalyses L-threonylcarbamoyladenylate + adenosine(37) in tRNA = N(6)-L-threonylcarbamoyladenosine(37) in tRNA + AMP + H(+). Its function is as follows. Required for the formation of a threonylcarbamoyl group on adenosine at position 37 (t(6)A37) in tRNAs that read codons beginning with adenine. Is involved in the transfer of the threonylcarbamoyl moiety of threonylcarbamoyl-AMP (TC-AMP) to the N6 group of A37, together with TsaE and TsaB. TsaD likely plays a direct catalytic role in this reaction. The sequence is that of tRNA N6-adenosine threonylcarbamoyltransferase from Leptospira borgpetersenii serovar Hardjo-bovis (strain JB197).